Consider the following 257-residue polypeptide: Imidazole glycerol phosphate synthase subunit HisF (257 aa).

Catalysis depends on residues Asp12 and Asp131.

Belongs to the HisA/HisF family. In terms of assembly, heterodimer of HisH and HisF.

The protein resides in the cytoplasm. It carries out the reaction 5-[(5-phospho-1-deoxy-D-ribulos-1-ylimino)methylamino]-1-(5-phospho-beta-D-ribosyl)imidazole-4-carboxamide + L-glutamine = D-erythro-1-(imidazol-4-yl)glycerol 3-phosphate + 5-amino-1-(5-phospho-beta-D-ribosyl)imidazole-4-carboxamide + L-glutamate + H(+). It functions in the pathway amino-acid biosynthesis; L-histidine biosynthesis; L-histidine from 5-phospho-alpha-D-ribose 1-diphosphate: step 5/9. In terms of biological role, IGPS catalyzes the conversion of PRFAR and glutamine to IGP, AICAR and glutamate. The HisF subunit catalyzes the cyclization activity that produces IGP and AICAR from PRFAR using the ammonia provided by the HisH subunit. The polypeptide is Imidazole glycerol phosphate synthase subunit HisF (Mycobacteroides abscessus (strain ATCC 19977 / DSM 44196 / CCUG 20993 / CIP 104536 / JCM 13569 / NCTC 13031 / TMC 1543 / L948) (Mycobacterium abscessus)).